Consider the following 213-residue polypeptide: CASP-like protein 2A1 (213 aa).

Topologically, residues 1-41 (MSKMAEEKAAAVGGLGGAGAADAAQQQQLAAGEAAAARVRP) are cytoplasmic. The chain crosses the membrane as a helical span at residues 42-62 (VETLLRAAPLGLCVAAMTVML). The Extracellular portion of the chain corresponds to 63-83 (RNQQSNEYGAVAYSDLGGFKY). The helical transmembrane segment at 84–104 (LVYANGLCAAYSLVSAFYTAV) threads the bilayer. The Cytoplasmic segment spans residues 105–113 (PRPATVSRS). Residues 114–134 (WLVFLLDQVFTYLILAAGAAA) form a helical membrane-spanning segment. The Extracellular segment spans residues 135–166 (AELLYLAYNGDKEVTWSEACGVFGSFCRQART). Residues 167 to 187 (SVAITFGTVLCFILLSLISSY) form a helical membrane-spanning segment. The Cytoplasmic segment spans residues 188–213 (RLFSAYEAPPSSALGSKGVEIAAYPR).

The protein belongs to the Casparian strip membrane proteins (CASP) family. As to quaternary structure, homodimer and heterodimers.

It is found in the cell membrane. The sequence is that of CASP-like protein 2A1 from Zea mays (Maize).